A 354-amino-acid chain; its full sequence is Probable butyrate kinase (354 aa).

The protein belongs to the acetokinase family.

The protein resides in the cytoplasm. The enzyme catalyses butanoate + ATP = butanoyl phosphate + ADP. In Phocaeicola vulgatus (strain ATCC 8482 / DSM 1447 / JCM 5826 / CCUG 4940 / NBRC 14291 / NCTC 11154) (Bacteroides vulgatus), this protein is Probable butyrate kinase.